The chain runs to 333 residues: T-cell surface glycoprotein CD1b-1 (333 aa).

The signal sequence occupies residues 1–18; the sequence is MLLLPLLLLAVIVPGGDN. The Extracellular portion of the chain corresponds to 19-302; it reads EDVFQGPTSF…LYWGHPTSTG (284 aa). Asparagine 38, asparagine 75, asparagine 146, and asparagine 258 each carry an N-linked (GlcNAc...) asparagine glycan. Cystine bridges form between cysteine 120/cysteine 184 and cysteine 224/cysteine 279. An Ig-like domain is found at 185-295; sequence PRYFLSVLDA…LGDQDIVLYW (111 aa). A helical membrane pass occupies residues 303–323; sequence LIFVAIIVSSLILLICLALWF. Topologically, residues 324–333 are cytoplasmic; that stretch reads WRRWSYLTIL. Positions 329 to 332 match the Internalization signal motif; it reads YLTI.

As to quaternary structure, heterodimer with B2M (beta-2-microglobulin). Interacts with saposin C.

It localises to the cell membrane. The protein resides in the endosome membrane. It is found in the lysosome membrane. Antigen-presenting protein that binds self and non-self lipid and glycolipid antigens and presents them to T-cell receptors on natural killer T-cells. The sequence is that of T-cell surface glycoprotein CD1b-1 from Ovis aries (Sheep).